We begin with the raw amino-acid sequence, 182 residues long: ADP-ribosylation factor-like protein 11 (182 aa).

Glycine 2 carries the N-myristoyl glycine lipid modification. GTP contacts are provided by residues 19-26 (GLDSAGKT), 63-67 (DVGGQ), and 122-125 (NKQE).

Belongs to the small GTPase superfamily. Arf family.

Functionally, may play a role in apoptosis. May act as a tumor suppressor. The chain is ADP-ribosylation factor-like protein 11 (ARL11) from Bos taurus (Bovine).